Consider the following 74-residue polypeptide: UPF0154 protein OB1676 (74 aa).

A helical transmembrane segment spans residues 4–24 (IWVVLIAIAALVAGVALGFFI).

The protein belongs to the UPF0154 family.

Its subcellular location is the membrane. The sequence is that of UPF0154 protein OB1676 from Oceanobacillus iheyensis (strain DSM 14371 / CIP 107618 / JCM 11309 / KCTC 3954 / HTE831).